Here is a 175-residue protein sequence, read N- to C-terminus: Sec-independent protein translocase protein TatB (175 aa).

Residues 1-21 (MLDLGLSKMALIGVVALVVLG) form a helical membrane-spanning segment. Residues 155–175 (SGAARVARHQPASLRRPTRFF) are disordered.

The protein belongs to the TatB family. The Tat system comprises two distinct complexes: a TatABC complex, containing multiple copies of TatA, TatB and TatC subunits, and a separate TatA complex, containing only TatA subunits. Substrates initially bind to the TatABC complex, which probably triggers association of the separate TatA complex to form the active translocon.

The protein localises to the cell inner membrane. In terms of biological role, part of the twin-arginine translocation (Tat) system that transports large folded proteins containing a characteristic twin-arginine motif in their signal peptide across membranes. Together with TatC, TatB is part of a receptor directly interacting with Tat signal peptides. TatB may form an oligomeric binding site that transiently accommodates folded Tat precursor proteins before their translocation. The chain is Sec-independent protein translocase protein TatB from Burkholderia lata (strain ATCC 17760 / DSM 23089 / LMG 22485 / NCIMB 9086 / R18194 / 383).